The chain runs to 585 residues: Bestrophin-1 (585 aa).

The Cytoplasmic portion of the chain corresponds to 1-31 (MTITYTSQVANARLGSFSRLLLCWRGSIYKL). Residue Ala10 coordinates Ca(2+). A helical transmembrane segment spans residues 32–51 (LYGEFFIFLLCYYIIRFIYR). Over 52–60 (LALTEEQQL) the chain is Extracellular. The chain crosses the membrane as a helical span at residues 61–82 (MFEKLTLYCDSYIQLIPISFVL). The Cytoplasmic segment spans residues 83–237 (GFYVTLVVTR…DWISIPLVYT (155 aa)). The helical transmembrane segment at 238–255 (QVVTVAVYSFFLTCLVGR) threads the bilayer. At 256–274 (QFLNPAKAYPGHELDLVVP) the chain is on the extracellular side. Residues 275–288 (VFTFLQFFFYVGWL) traverse the membrane as a helical segment. Residues 289 to 585 (KVAEQLINPF…ALENRDEAHS (297 aa)) lie on the Cytoplasmic side of the membrane. Ca(2+) contacts are provided by Gln293, Asn296, Asp301, and Asp304. An auto-inhibitory segment region spans residues 346–379 (PYTAASAQFRRASFMGSTFNISLNKEEMEFQPNQ).

Belongs to the anion channel-forming bestrophin (TC 1.A.46) family. Calcium-sensitive chloride channel subfamily. Interacts with YWHAG; this interaction promotes the ligand-gated L-glutamate channel activity leading to the positive regulation of NMDA glutamate receptor activity through the L-glutamate secretion.

It localises to the cell membrane. The protein localises to the basolateral cell membrane. It catalyses the reaction chloride(in) = chloride(out). The catalysed reaction is hydrogencarbonate(in) = hydrogencarbonate(out). It carries out the reaction 4-aminobutanoate(in) = 4-aminobutanoate(out). The enzyme catalyses L-glutamate(out) = L-glutamate(in). Functionally, ligand-gated anion channel that allows the movement of anions across cell membranes when activated by calcium (Ca2+). Allows the movement of chloride and hydrogencarbonate. Found in a partially open conformation leading to significantly smaller chloride movement. Upon F2R/PAR-1 activation, the sequestered calcium is released into the cytosol of astrocytes, leading to the (Ca2+)-dependent release of L-glutamate into the synaptic cleft that targets the neuronal postsynaptic GRIN2A/NMDAR receptor resulting in the synaptic plasticity regulation. Upon activation of the norepinephrine-alpha-1 adrenergic receptor signaling pathway, transports as well D-serine than L-glutamate in a (Ca2+)-dependent manner, leading to activation of adjacent NMDAR receptors and therefore regulates the heterosynaptic long-term depression and metaplasticity during initial memory acquisition. Releases the 4-aminobutanoate neurotransmitter in a (Ca2+)-dependent manner, and participates in its tonic release from cerebellar glial cells. The polypeptide is Bestrophin-1 (BEST1) (Macaca fascicularis (Crab-eating macaque)).